Consider the following 509-residue polypeptide: Oligo-1,6-glucosidase (509 aa).

The active-site Nucleophile is Asp-198. The active-site Proton donor is the Glu-254.

It belongs to the glycosyl hydrolase 13 family.

It is found in the cytoplasm. It carries out the reaction Hydrolysis of (1-&gt;6)-alpha-D-glucosidic linkages in some oligosaccharides produced from starch and glycogen by alpha-amylase, and in isomaltose.. This Bacillus sp. (strain F5) protein is Oligo-1,6-glucosidase (malL).